Consider the following 510-residue polypeptide: Hyaluronidase PH-20 (510 aa).

Positions 1-35 (MGVLKFKHIFFRSFVKSSGVSQIVFTFLLIPCCLT) are cleaved as a signal peptide. 2 cysteine pairs are disulfide-bonded: C60/C351 and C224/C238. N82 carries N-linked (GlcNAc...) asparagine glycosylation. The active-site Proton donor is E148. N-linked (GlcNAc...) asparagine glycosylation is found at N166, N235, N254, and N368. Cystine bridges form between C376-C387, C381-C435, and C437-C464. N-linked (GlcNAc...) asparagine glycosylation is found at N393, N440, and N484. S491 carries GPI-anchor amidated serine lipidation. A propeptide spans 492 to 510 (TTMFIVNILFLIISSVASL) (removed in mature form).

It belongs to the glycosyl hydrolase 56 family. Testis.

It localises to the cell membrane. The catalysed reaction is Random hydrolysis of (1-&gt;4)-linkages between N-acetyl-beta-D-glucosamine and D-glucuronate residues in hyaluronate.. Functionally, involved in sperm-egg adhesion. Upon fertilization sperm must first penetrate a layer of cumulus cells that surrounds the egg before reaching the zona pellucida. The cumulus cells are embedded in a matrix containing hyaluronic acid which is formed prior to ovulation. This protein aids in penetrating the layer of cumulus cells by digesting hyaluronic acid. In Macaca fascicularis (Crab-eating macaque), this protein is Hyaluronidase PH-20 (SPAM1).